Here is a 68-residue protein sequence, read N- to C-terminus: MARVTIEDCLKNVPSRFALVHMAALRVRQLREGADLLIKPSKNEDAVIALREIAANRIVLKNKSDKKG.

The protein belongs to the RNA polymerase subunit omega family. The RNAP catalytic core consists of 2 alpha, 1 beta, 1 beta' and 1 omega subunit. When a sigma factor is associated with the core the holoenzyme is formed, which can initiate transcription.

The catalysed reaction is RNA(n) + a ribonucleoside 5'-triphosphate = RNA(n+1) + diphosphate. Its function is as follows. Promotes RNA polymerase assembly. Latches the N- and C-terminal regions of the beta' subunit thereby facilitating its interaction with the beta and alpha subunits. This is DNA-directed RNA polymerase subunit omega from Desulforapulum autotrophicum (strain ATCC 43914 / DSM 3382 / VKM B-1955 / HRM2) (Desulfobacterium autotrophicum).